A 598-amino-acid chain; its full sequence is Leucine aminopeptidase 2, chloroplastic (598 aa).

A chloroplast-targeting transit peptide spans 1–71 (MATAASTSAA…GHRARMGHTA (71 aa)). The Mn(2+) site is built by Lys-367 and Asp-372. Residue Lys-379 is part of the active site. Mn(2+)-binding residues include Asp-392, Asp-452, and Glu-454. Residue Arg-456 is part of the active site.

It belongs to the peptidase M17 family. In terms of assembly, homohexamer (dimer of homotrimers). The cofactor is Mn(2+).

It localises to the plastid. The protein localises to the chloroplast. It catalyses the reaction Release of an N-terminal amino acid, Xaa-|-Yaa-, in which Xaa is preferably Leu, but may be other amino acids including Pro although not Arg or Lys, and Yaa may be Pro. Amino acid amides and methyl esters are also readily hydrolyzed, but rates on arylamides are exceedingly low.. The catalysed reaction is Release of N-terminal proline from a peptide.. Its function is as follows. Presumably involved in the processing and regular turnover of intracellular proteins. Catalyzes the removal of unsubstituted N-terminal amino acids from various peptides. This Oryza sativa subsp. japonica (Rice) protein is Leucine aminopeptidase 2, chloroplastic.